A 270-amino-acid polypeptide reads, in one-letter code: Probable septum site-determining protein MinC (270 aa).

The segment at aspartate 105–alanine 129 is disordered. A compositionally biased stretch (low complexity) spans glutamate 116 to alanine 129.

It belongs to the MinC family. Interacts with MinD and FtsZ.

In terms of biological role, cell division inhibitor that blocks the formation of polar Z ring septums. Rapidly oscillates between the poles of the cell to destabilize FtsZ filaments that have formed before they mature into polar Z rings. Prevents FtsZ polymerization. This chain is Probable septum site-determining protein MinC, found in Burkholderia pseudomallei (strain 668).